A 708-amino-acid chain; its full sequence is C-Jun-amino-terminal kinase-interacting protein 1 (708 aa).

Residues 1 to 26 (MAERESGLSGGAASPPAASPFLGLHI) are disordered. The segment covering 11 to 24 (GAASPPAASPFLGL) has biased composition (low complexity). S14, S28, and S39 each carry phosphoserine. Residues 69–368 (PPRAGLLSAG…PPRASLSSDT (300 aa)) form a disordered region. Over residues 71 to 87 (RAGLLSAGSSGSAGSRL) the composition is skewed to low complexity. T103 carries the post-translational modification Phosphothreonine; by MAPK8, MAPK9 and MAPK10. Positions 105–116 (GAEDDEEDDDEL) are enriched in acidic residues. Positions 126-282 (SKAESGQEPA…EATEEIYLTP (157 aa)) are JNK-binding domain (JBD). The residue at position 149 (S149) is a Phosphoserine. Residues 154-173 (RPKRPTTLNLFPQVPRSQDT) form a minimal inhibitory domain (MID) region. Over residues 159 to 179 (TTLNLFPQVPRSQDTLNNNSL) the composition is skewed to polar residues. A phosphoserine mark is found at S178, S184, S190, S192, and S193. Polar residues predominate over residues 191–201 (RSSSPLKTGEQ). The residue at position 202 (T202) is a Phosphothreonine; by MAPK8, MAPK9 and MAPK10. Residue S211 is modified to Phosphoserine. A compositionally biased stretch (polar residues) spans 220-232 (PVPTQDRGTSTDS). Residues 264–274 (IHYQADVRLEA) show a composition bias toward basic and acidic residues. Positions 280–468 (LTPVQRPPDP…NVFMSGRSRS (189 aa)) are interaction with MAP3K7. Over residues 292-308 (PTSTFLPPTESRMSVSS) the composition is skewed to polar residues. 9 positions are modified to phosphoserine: S308, S325, S327, S337, S352, S363, S366, S404, and S406. 2 consecutive short sequence motifs (D-box) follow at residues 350–357 (RGSLGEPP) and 361–369 (RASLSSDTS). T408 carries the post-translational modification Phosphothreonine. The tract at residues 426–448 (EEYEEAPQPRPPTCLSEDSTPDE) is disordered. A phosphoserine mark is found at S441 and S444. Position 445 is a phosphothreonine (T445). Phosphoserine is present on residues S466, S468, S469, and S470. The tract at residues 468–657 (SSSAESFGLF…PKNNKYFGFI (190 aa)) is interaction with VRK2. In terms of domain architecture, SH3 spans 485–546 (EHEQTHRAIF…PAYYAIEVTK (62 aa)). The PID domain maps to 558 to 697 (SDWIDQFRVK…FQQFYKQFVE (140 aa)).

This sequence belongs to the JIP scaffold family. In terms of assembly, forms homo- or heterooligomeric complexes. Binds specific components of the JNK signaling pathway namely MAPK8/JNK1, MAPK9/JNK2, MAPK10/JNK3, MAP2K7/MKK7, MAP3K11/MLK3 and DLK1. Also binds the proline-rich domain-containing splice variant of apolipoprotein E receptor 2 (ApoER2). Interacts, via the PID domain, with ARHGEF28. Binds the cytoplasmic tails of LRP1 and LRP2 (Megalin). Binds the TPR motif-containing C-terminal of kinesin light chain, KLC1. Pre-assembled MAPK8IP1 scaffolding complexes are then transported as a cargo of kinesin, to the required subcellular location. Interacts with the cytoplasmic domain of APP. Interacts with DCLK2, VRK2 and MAP3K7/TAK1. Found in a complex with SH3RF1, RAC1, MAP3K11/MLK3, MAP2K7/MKK7 and MAPK8/JNK1. Found in a complex with SH3RF1, RAC2, MAP3K7/TAK1, MAP2K7/MKK7, MAPK8/JNK1 and MAPK9/JNK2. Interacts with SH3RF2. Phosphorylated by MAPK8, MAPK9 and MAPK10. Phosphorylation on Thr-103 is also necessary for the dissociation and activation of MAP3K12. Phosphorylated by VRK2. Hyperphosphorylated during mitosis following activation of stress-activated and MAP kinases. In terms of processing, ubiquitinated. Two preliminary events are required to prime for ubiquitination; phosphorylation and an increased in intracellular calcium concentration. Then, the calcium influx initiates ubiquitination and degradation by the ubiquitin-proteasome pathway. In terms of tissue distribution, highly expressed in brain and pancreatic beta-cells. Weaker expression found in kidney.

The protein localises to the cytoplasm. The protein resides in the perinuclear region. Its subcellular location is the nucleus. It localises to the endoplasmic reticulum membrane. It is found in the mitochondrion membrane. Its function is as follows. The JNK-interacting protein (JIP) group of scaffold proteins selectively mediates JNK signaling by aggregating specific components of the MAPK cascade to form a functional JNK signaling module. Required for JNK activation in response to excitotoxic stress. Cytoplasmic MAPK8IP1 causes inhibition of JNK-regulated activity by retaining JNK in the cytoplasm and thus inhibiting the JNK phosphorylation of c-Jun. May also participate in ApoER2-specific reelin signaling. Directly, or indirectly, regulates GLUT2 gene expression and beta-cell function. Appears to have a role in cell signaling in mature and developing nerve terminals. May function as a regulator of vesicle transport, through interactions with the JNK-signaling components and motor proteins. Functions as an anti-apoptotic protein and whose level seems to influence the beta-cell death or survival response. Acts as a scaffold protein that coordinates with SH3RF1 in organizing different components of the JNK pathway, including RAC1 or RAC2, MAP3K11/MLK3 or MAP3K7/TAK1, MAP2K7/MKK7, MAPK8/JNK1 and/or MAPK9/JNK2 into a functional multiprotein complex to ensure the effective activation of the JNK signaling pathway. Regulates the activation of MAPK8/JNK1 and differentiation of CD8(+) T-cells. The protein is C-Jun-amino-terminal kinase-interacting protein 1 (Mapk8ip1) of Rattus norvegicus (Rat).